Reading from the N-terminus, the 437-residue chain is Phosphomethylpyrimidine synthase (437 aa).

Residues asparagine 69, methionine 98, tyrosine 127, histidine 163, 185-187 (SRG), 226-229 (DACR), and glutamate 265 each bind substrate. A Zn(2+)-binding site is contributed by histidine 269. Tyrosine 292 serves as a coordination point for substrate. Histidine 333 lines the Zn(2+) pocket. Residues cysteine 409, cysteine 412, and cysteine 416 each contribute to the [4Fe-4S] cluster site.

This sequence belongs to the ThiC family. [4Fe-4S] cluster serves as cofactor.

It carries out the reaction 5-amino-1-(5-phospho-beta-D-ribosyl)imidazole + S-adenosyl-L-methionine = 4-amino-2-methyl-5-(phosphooxymethyl)pyrimidine + CO + 5'-deoxyadenosine + formate + L-methionine + 3 H(+). Its pathway is cofactor biosynthesis; thiamine diphosphate biosynthesis. In terms of biological role, catalyzes the synthesis of the hydroxymethylpyrimidine phosphate (HMP-P) moiety of thiamine from aminoimidazole ribotide (AIR) in a radical S-adenosyl-L-methionine (SAM)-dependent reaction. This is Phosphomethylpyrimidine synthase from Clostridium botulinum (strain Loch Maree / Type A3).